A 213-amino-acid polypeptide reads, in one-letter code: 3-demethoxyubiquinol 3-hydroxylase (213 aa).

The Fe cation site is built by Glu-62, Glu-92, His-95, Glu-144, Glu-176, and His-179.

The protein belongs to the COQ7 family. Fe cation is required as a cofactor.

Its subcellular location is the cell membrane. It catalyses the reaction a 5-methoxy-2-methyl-3-(all-trans-polyprenyl)benzene-1,4-diol + AH2 + O2 = a 3-demethylubiquinol + A + H2O. The protein operates within cofactor biosynthesis; ubiquinone biosynthesis. In terms of biological role, catalyzes the hydroxylation of 2-nonaprenyl-3-methyl-6-methoxy-1,4-benzoquinol during ubiquinone biosynthesis. In Legionella pneumophila (strain Paris), this protein is 3-demethoxyubiquinol 3-hydroxylase.